Here is a 244-residue protein sequence, read N- to C-terminus: 7-cyano-7-deazaguanine synthase (244 aa).

Position 14–24 (14–24) interacts with ATP; it reads FSGGQDSATCV. 4 residues coordinate Zn(2+): cysteine 202, cysteine 217, cysteine 220, and cysteine 223.

Belongs to the QueC family. The cofactor is Zn(2+).

The enzyme catalyses 7-carboxy-7-deazaguanine + NH4(+) + ATP = 7-cyano-7-deazaguanine + ADP + phosphate + H2O + H(+). It functions in the pathway purine metabolism; 7-cyano-7-deazaguanine biosynthesis. Functionally, catalyzes the ATP-dependent conversion of 7-carboxy-7-deazaguanine (CDG) to 7-cyano-7-deazaguanine (preQ(0)). This is 7-cyano-7-deazaguanine synthase from Burkholderia ambifaria (strain MC40-6).